We begin with the raw amino-acid sequence, 24 residues long: RuBisCO large subunit-binding protein subunit beta, chloroplastic (24 aa).

It belongs to the chaperonin (HSP60) family. Oligomer of probably six alpha and six beta subunits.

It is found in the plastid. The protein localises to the chloroplast. In terms of biological role, this protein binds RuBisCO small and large subunits and is implicated in the assembly of the enzyme oligomer. This is RuBisCO large subunit-binding protein subunit beta, chloroplastic from Populus euphratica (Euphrates poplar).